We begin with the raw amino-acid sequence, 66 residues long: Large ribosomal subunit protein bL33c (66 aa).

The protein belongs to the bacterial ribosomal protein bL33 family.

Its subcellular location is the plastid. The protein localises to the chloroplast. This chain is Large ribosomal subunit protein bL33c, found in Calycanthus floridus var. glaucus (Eastern sweetshrub).